A 240-amino-acid chain; its full sequence is 6-carboxyhexanoate--CoA ligase (240 aa).

It belongs to the BioW family. In terms of assembly, homodimer. Mg(2+) serves as cofactor.

The catalysed reaction is heptanedioate + ATP + CoA = 6-carboxyhexanoyl-CoA + AMP + diphosphate. The protein operates within metabolic intermediate metabolism; pimeloyl-CoA biosynthesis; pimeloyl-CoA from pimelate: step 1/1. In terms of biological role, catalyzes the transformation of pimelate into pimeloyl-CoA with concomitant hydrolysis of ATP to AMP. In Aquifex aeolicus (strain VF5), this protein is 6-carboxyhexanoate--CoA ligase.